Here is a 659-residue protein sequence, read N- to C-terminus: Heparin-sulfate lyase (659 aa).

A signal peptide spans 1–24 (MTTKIFKRIIVFAVIALSSGNILA). The active-site Proton acceptor is tyrosine 294.

The protein belongs to the polysaccharide lyase 12 family.

The protein localises to the periplasm. The catalysed reaction is Elimination of sulfate, appears to act on linkages between N-acetyl-D-glucosamine and uronate. Product is an unsaturated sugar.. Specifically cleaves heparan sulfate-rich regions of acidic polysaccharides. Does not act on N,O-desulfated glucosamine or N-acetyl-O-sulfated glucosamine linkages. Functions in cleaving metazoan heparan sulfate and providing carbon, nitrogen and sulfate sources for microorganisms. This Pedobacter heparinus (strain ATCC 13125 / DSM 2366 / CIP 104194 / JCM 7457 / NBRC 12017 / NCIMB 9290 / NRRL B-14731 / HIM 762-3) protein is Heparin-sulfate lyase (hepC).